We begin with the raw amino-acid sequence, 1164 residues long: Nuclear exosome regulator NRDE2 (1164 aa).

Disordered regions lie at residues 1–25 (MALF…ELDW) and 39–149 (LSQQ…GHRF). A2 bears the N-acetylalanine mark. A compositionally biased stretch (basic and acidic residues) spans 61 to 73 (LKSESSDESDTNK). Residues 61 to 383 (LKSESSDESD…IESNQSSVDL (323 aa)) adopt a coiled-coil conformation. Positions 74–103 (KLKQTSRKKKKEKKKKRKHQHHKKTKRKHG) are enriched in basic residues. The span at 110 to 133 (SETDTDSEKDKPSRGVGGSKKESE) shows a compositional bias: basic and acidic residues. An MID/MTR4-interacting domain region spans residues 163-266 (FRTDKKPDPA…KDLEDAAPVT (104 aa)). The interval 279–305 (TTHWLQGQGPPEQESKQPDAQPDSESA) is disordered. 5 HAT repeats span residues 305–337 (AALK…FQDE), 395–427 (WEPS…FCQS), 758–792 (SQGK…LEWL), 978–1010 (YPLA…IQNK), and 1067–1101 (GLMH…FLVS).

It belongs to the NRDE2 family. Interacts with MTREX; the interaction is direct and stabilizes NRDE2. Interacts with EXOSC10, EFTUD2 and EIF4A3.

It is found in the nucleus speckle. Its subcellular location is the nucleus. The protein resides in the nucleolus. The protein localises to the nucleoplasm. Functionally, protein of the nuclear speckles that regulates RNA degradation and export from the nucleus through its interaction with MTREX an essential factor directing various RNAs to exosomal degradation. Changes the conformation of MTREX, precluding its association with the nuclear exosome and interaction with proteins required for its function in RNA exosomal degradation. Negatively regulates, for instance, the degradation of mRNAs and lncRNAs by inhibiting their MTREX-mediated recruitment to nuclear exosome. By preventing the degradation of RNAs in the nucleus, it promotes their export to the cytoplasm. U5 snRNP-associated RNA splicing factor which is required for efficient splicing of CEP131 pre-mRNA and plays an important role in centrosome maturation, integrity and function during mitosis. Suppresses intron retention in a subset of pre-mRNAs containing short, GC-rich introns with relatively weak 5' and 3' splice sites. Plays a role in DNA damage response. In Homo sapiens (Human), this protein is Nuclear exosome regulator NRDE2.